We begin with the raw amino-acid sequence, 347 residues long: NADH-ubiquinone oxidoreductase chain 2 (347 aa).

A run of 11 helical transmembrane segments spans residues 3–23 (PPIL…VMLS), 25–45 (HWLL…PVLM), 66–86 (ASML…QWVV), 96–116 (IMMT…FWVP), 122–142 (ITLT…MSVL), 149–169 (INTN…GWGG), 178–198 (IMAY…IYNP), 201–221 (MILN…LFML), 237–257 (FPLI…LPPL), 274–294 (NMII…YFYL), and 323–343 (TILL…TPML).

The protein belongs to the complex I subunit 2 family. Core subunit of respiratory chain NADH dehydrogenase (Complex I) which is composed of 45 different subunits. Interacts with TMEM242.

It is found in the mitochondrion inner membrane. The enzyme catalyses a ubiquinone + NADH + 5 H(+)(in) = a ubiquinol + NAD(+) + 4 H(+)(out). Functionally, core subunit of the mitochondrial membrane respiratory chain NADH dehydrogenase (Complex I) which catalyzes electron transfer from NADH through the respiratory chain, using ubiquinone as an electron acceptor. Essential for the catalytic activity and assembly of complex I. This is NADH-ubiquinone oxidoreductase chain 2 from Canis rufus (Red wolf).